A 379-amino-acid chain; its full sequence is Fructose-1,6-bisphosphate aldolase/phosphatase (379 aa).

D13 acts as the Proton acceptor; for FBP phosphatase activity in catalysis. Positions 13, 20, 51, and 52 each coordinate Mg(2+). H20 contacts beta-D-fructose 1,6-bisphosphate. Dihydroxyacetone phosphate is bound at residue H20. Y89 provides a ligand contact to beta-D-fructose 1,6-bisphosphate. Q93 is a Mg(2+) binding site. Position 102–103 (102–103 (GN)) interacts with beta-D-fructose 1,6-bisphosphate. D130 is a Mg(2+) binding site. K131 is a binding site for beta-D-fructose 1,6-bisphosphate. K131 is a binding site for dihydroxyacetone phosphate. Y227 functions as the Proton donor/acceptor; for FBP aldolase activity in the catalytic mechanism. K230, D231, and D232 together coordinate Mg(2+). K230 serves as the catalytic Schiff-base intermediate with DHAP; for FBP aldolase activity. Beta-D-fructose 1,6-bisphosphate is bound by residues 240-241 (QS), R264, D285, and Y346. Residues R264 and D285 each contribute to the dihydroxyacetone phosphate site.

Belongs to the FBP aldolase/phosphatase family. Homooctamer; dimer of tetramers. It depends on Mg(2+) as a cofactor.

The enzyme catalyses beta-D-fructose 1,6-bisphosphate + H2O = beta-D-fructose 6-phosphate + phosphate. The catalysed reaction is beta-D-fructose 1,6-bisphosphate = D-glyceraldehyde 3-phosphate + dihydroxyacetone phosphate. Its pathway is carbohydrate biosynthesis; gluconeogenesis. Its function is as follows. Catalyzes two subsequent steps in gluconeogenesis: the aldol condensation of dihydroxyacetone phosphate (DHAP) and glyceraldehyde-3-phosphate (GA3P) to fructose-1,6-bisphosphate (FBP), and the dephosphorylation of FBP to fructose-6-phosphate (F6P). The chain is Fructose-1,6-bisphosphate aldolase/phosphatase from Moorella thermoacetica (strain ATCC 39073 / JCM 9320).